A 173-amino-acid polypeptide reads, in one-letter code: Small ribosomal subunit protein uS5 (173 aa).

The S5 DRBM domain occupies 16 to 79 (LSELLVSVRR…NAAKKNMIRV (64 aa)).

Belongs to the universal ribosomal protein uS5 family. As to quaternary structure, part of the 30S ribosomal subunit. Contacts proteins S4 and S8.

With S4 and S12 plays an important role in translational accuracy. Functionally, located at the back of the 30S subunit body where it stabilizes the conformation of the head with respect to the body. In Anaplasma phagocytophilum (strain HZ), this protein is Small ribosomal subunit protein uS5.